The chain runs to 156 residues: 6,7-dimethyl-8-ribityllumazine synthase (156 aa).

5-amino-6-(D-ribitylamino)uracil contacts are provided by residues Phe22, 57–59 (AYE), and 81–83 (TVI). 86–87 (GT) contacts (2S)-2-hydroxy-3-oxobutyl phosphate. Catalysis depends on His89, which acts as the Proton donor. Phe114 provides a ligand contact to 5-amino-6-(D-ribitylamino)uracil. (2S)-2-hydroxy-3-oxobutyl phosphate is bound at residue Arg128.

The protein belongs to the DMRL synthase family. As to quaternary structure, forms an icosahedral capsid composed of 60 subunits, arranged as a dodecamer of pentamers.

The enzyme catalyses (2S)-2-hydroxy-3-oxobutyl phosphate + 5-amino-6-(D-ribitylamino)uracil = 6,7-dimethyl-8-(1-D-ribityl)lumazine + phosphate + 2 H2O + H(+). It participates in cofactor biosynthesis; riboflavin biosynthesis; riboflavin from 2-hydroxy-3-oxobutyl phosphate and 5-amino-6-(D-ribitylamino)uracil: step 1/2. Its function is as follows. Catalyzes the formation of 6,7-dimethyl-8-ribityllumazine by condensation of 5-amino-6-(D-ribitylamino)uracil with 3,4-dihydroxy-2-butanone 4-phosphate. This is the penultimate step in the biosynthesis of riboflavin. This chain is 6,7-dimethyl-8-ribityllumazine synthase, found in Erwinia tasmaniensis (strain DSM 17950 / CFBP 7177 / CIP 109463 / NCPPB 4357 / Et1/99).